A 718-amino-acid polypeptide reads, in one-letter code: Polyribonucleotide nucleotidyltransferase (718 aa).

The Mg(2+) site is built by Asp506 and Asp512. A KH domain is found at 572–632 (PKLELFSVDP…EQIKAAKDYI (61 aa)). The S1 motif domain occupies 657-718 (GQEFQGIVKK…NGKISVDLCE (62 aa)).

The protein belongs to the polyribonucleotide nucleotidyltransferase family. Requires Mg(2+) as cofactor.

The protein localises to the cytoplasm. It carries out the reaction RNA(n+1) + phosphate = RNA(n) + a ribonucleoside 5'-diphosphate. Involved in mRNA degradation. Catalyzes the phosphorolysis of single-stranded polyribonucleotides processively in the 3'- to 5'-direction. This chain is Polyribonucleotide nucleotidyltransferase, found in Campylobacter jejuni subsp. doylei (strain ATCC BAA-1458 / RM4099 / 269.97).